The chain runs to 277 residues: Large ribosomal subunit protein uL2 (277 aa).

A disordered region spans residues 215 to 263 (LGRKPHQRGSAMNPVDHPHGGGEGRTGAGRVPVSPWGQPAKGLKTRKKR).

This sequence belongs to the universal ribosomal protein uL2 family. Part of the 50S ribosomal subunit. Forms a bridge to the 30S subunit in the 70S ribosome.

In terms of biological role, one of the primary rRNA binding proteins. Required for association of the 30S and 50S subunits to form the 70S ribosome, for tRNA binding and peptide bond formation. It has been suggested to have peptidyltransferase activity; this is somewhat controversial. Makes several contacts with the 16S rRNA in the 70S ribosome. The sequence is that of Large ribosomal subunit protein uL2 from Deinococcus geothermalis (strain DSM 11300 / CIP 105573 / AG-3a).